We begin with the raw amino-acid sequence, 191 residues long: Protein GrpE (191 aa).

2 stretches are compositionally biased toward basic and acidic residues: residues 1–19 and 29–42; these read MKDEHNQEHDHLSQKEPES and QQGEEKQEASEKEC. The tract at residues 1-42 is disordered; the sequence is MKDEHNQEHDHLSQKEPESYQKACACKEQQGEEKQEASEKEC.

The protein belongs to the GrpE family. In terms of assembly, homodimer.

It is found in the cytoplasm. In terms of biological role, participates actively in the response to hyperosmotic and heat shock by preventing the aggregation of stress-denatured proteins, in association with DnaK and GrpE. It is the nucleotide exchange factor for DnaK and may function as a thermosensor. Unfolded proteins bind initially to DnaJ; upon interaction with the DnaJ-bound protein, DnaK hydrolyzes its bound ATP, resulting in the formation of a stable complex. GrpE releases ADP from DnaK; ATP binding to DnaK triggers the release of the substrate protein, thus completing the reaction cycle. Several rounds of ATP-dependent interactions between DnaJ, DnaK and GrpE are required for fully efficient folding. This is Protein GrpE from Helicobacter pylori (strain HPAG1).